Reading from the N-terminus, the 405-residue chain is Transposase from transposon Tn1545 (405 aa).

The region spanning 79–163 (GKKMTLCQLY…SLKASFYIAI (85 aa)) is the Core-binding (CB) domain. The Tyr recombinase domain occupies 186–392 (VPKTVLTEEQ…TFDSAMAEMK (207 aa)). Active-site residues include R225, K264, H343, R346, and H369. Y379 acts as the O-(3'-phospho-DNA)-tyrosine intermediate in catalysis.

It belongs to the 'phage' integrase family.

The polypeptide is Transposase from transposon Tn1545 (int) (Streptococcus agalactiae serotype V (strain ATCC BAA-611 / 2603 V/R)).